Consider the following 208-residue polypeptide: Large ribosomal subunit protein bL25 (208 aa).

The protein belongs to the bacterial ribosomal protein bL25 family. CTC subfamily. In terms of assembly, part of the 50S ribosomal subunit; part of the 5S rRNA/L5/L18/L25 subcomplex. Contacts the 5S rRNA. Binds to the 5S rRNA independently of L5 and L18.

In terms of biological role, this is one of the proteins that binds to the 5S RNA in the ribosome where it forms part of the central protuberance. This chain is Large ribosomal subunit protein bL25, found in Syntrophotalea carbinolica (strain DSM 2380 / NBRC 103641 / GraBd1) (Pelobacter carbinolicus).